The following is a 120-amino-acid chain: NAD(P)H-quinone oxidoreductase subunit 3, chloroplastic (120 aa).

3 consecutive transmembrane segments (helical) span residues 9–29 (IFWA…LISG), 64–84 (MFAL…PWAM), and 88–108 (VLGV…ILGL).

The protein belongs to the complex I subunit 3 family. As to quaternary structure, NDH is composed of at least 16 different subunits, 5 of which are encoded in the nucleus.

Its subcellular location is the plastid. The protein localises to the chloroplast thylakoid membrane. The catalysed reaction is a plastoquinone + NADH + (n+1) H(+)(in) = a plastoquinol + NAD(+) + n H(+)(out). It catalyses the reaction a plastoquinone + NADPH + (n+1) H(+)(in) = a plastoquinol + NADP(+) + n H(+)(out). Its function is as follows. NDH shuttles electrons from NAD(P)H:plastoquinone, via FMN and iron-sulfur (Fe-S) centers, to quinones in the photosynthetic chain and possibly in a chloroplast respiratory chain. The immediate electron acceptor for the enzyme in this species is believed to be plastoquinone. Couples the redox reaction to proton translocation, and thus conserves the redox energy in a proton gradient. The polypeptide is NAD(P)H-quinone oxidoreductase subunit 3, chloroplastic (Arabis hirsuta (Hairy rock-cress)).